Reading from the N-terminus, the 1285-residue chain is Peroxisomal ATPase PEX1 (1285 aa).

Positions 344 to 353 (QQGKTKQSVM) are enriched in polar residues. The interval 344–373 (QQGKTKQSVMSPEKEKHPLESPNHKQIGSD) is disordered. Ser-354 carries the post-translational modification Phosphoserine. The span at 355-373 (PEKEKHPLESPNHKQIGSD) shows a compositional bias: basic and acidic residues. Residues 601 to 608 (GGKGSGKS) and 883 to 890 (GPPGTGKT) contribute to the ATP site. The span at 1142-1161 (NGTSSDLSSQCPSAPSSVTQ) shows a compositional bias: polar residues. A disordered region spans residues 1142–1162 (NGTSSDLSSQCPSAPSSVTQD). Residues Ser-1183, Ser-1211, and Ser-1213 each carry the phosphoserine modification. A disordered region spans residues 1262 to 1285 (FQNPKKRKNPSGTVFRPGQKVTLA).

This sequence belongs to the AAA ATPase family. As to quaternary structure, homooligomer; homooligomerizes in the cytosol, interaction with PEX6 promotes dissociation of the homooligomer. Interacts with PEX6; forming the PEX1-PEX6 AAA ATPase complex, which is composed of a heterohexamer formed by a trimer of PEX1-PEX6 dimers. Interacts indirectly with PEX26, via its interaction with PEX6.

The protein localises to the cytoplasm. The protein resides in the cytosol. Its subcellular location is the peroxisome membrane. The enzyme catalyses ATP + H2O = ADP + phosphate + H(+). Its function is as follows. Component of the PEX1-PEX6 AAA ATPase complex, a protein dislocase complex that mediates the ATP-dependent extraction of the PEX5 receptor from peroxisomal membranes, an essential step for PEX5 recycling. Specifically recognizes PEX5 monoubiquitinated at 'Cys-11', and pulls it out of the peroxisome lumen through the PEX2-PEX10-PEX12 retrotranslocation channel. Extraction by the PEX1-PEX6 AAA ATPase complex is accompanied by unfolding of the TPR repeats and release of bound cargo from PEX5. The polypeptide is Peroxisomal ATPase PEX1 (Cricetulus griseus (Chinese hamster)).